Consider the following 102-residue polypeptide: Bowman-Birk type wound-induced proteinase inhibitor WIP1 (102 aa).

The first 15 residues, 1–15 (MKSSPHLVLILCLQA), serve as a signal peptide directing secretion. Intrachain disulfides connect Cys-46-Cys-102, Cys-47-Cys-60, Cys-50-Cys-98, Cys-67-Cys-74, and Cys-71-Cys-90.

The protein belongs to the Bowman-Birk serine protease inhibitor family.

This Zea mays (Maize) protein is Bowman-Birk type wound-induced proteinase inhibitor WIP1 (WIP1).